An 825-amino-acid polypeptide reads, in one-letter code: Thioredoxin domain-containing protein 16 (825 aa).

A signal peptide spans 1–27; that stretch reads MFSGFNVFRVGISFVIMCIFYMPTVNS. Residues 392-495 form the Thioredoxin domain; it reads LTVELTEETF…EDLLKFIQLN (104 aa). Cysteine 449 and cysteine 456 are oxidised to a cystine. Asparagine 460 is a glycosylation site (N-linked (GlcNAc...) asparagine). The segment at 762–787 is disordered; sequence RKVPKCMKETDVQENDKEQHEDKSAV. A compositionally biased stretch (basic and acidic residues) spans 767–787; it reads CMKETDVQENDKEQHEDKSAV. A Mediates endoplasmic reticulum retention motif is present at residues 816–819; that stretch reads DKEL.

In terms of assembly, interacts with FOXRED2. Post-translationally, glycosylated.

It localises to the secreted. It is found in the endoplasmic reticulum lumen. The chain is Thioredoxin domain-containing protein 16 from Homo sapiens (Human).